The primary structure comprises 510 residues: NAD(P)H-quinone oxidoreductase subunit 2 B, chloroplastic (510 aa).

13 helical membrane passes run 24–44 (LLLF…GLIL), 57–77 (IPWL…ALLF), 99–119 (IFQF…VEYI), 124–144 (MAIT…MFLC), 149–169 (LITI…LSGY), 183–203 (YLLM…WLYG), 227–247 (PGIS…LSPA), 295–315 (WHLL…LIAI), 323–343 (MLAY…IVGD), 354–374 (YMLF…LFGL), 395–415 (ALSL…AGFF), 418–438 (LYLF…IGLL), and 484–504 (MIVC…IIAI).

This sequence belongs to the complex I subunit 2 family. In terms of assembly, NDH is composed of at least 16 different subunits, 5 of which are encoded in the nucleus.

It is found in the plastid. The protein resides in the chloroplast thylakoid membrane. It catalyses the reaction a plastoquinone + NADH + (n+1) H(+)(in) = a plastoquinol + NAD(+) + n H(+)(out). The catalysed reaction is a plastoquinone + NADPH + (n+1) H(+)(in) = a plastoquinol + NADP(+) + n H(+)(out). NDH shuttles electrons from NAD(P)H:plastoquinone, via FMN and iron-sulfur (Fe-S) centers, to quinones in the photosynthetic chain and possibly in a chloroplast respiratory chain. The immediate electron acceptor for the enzyme in this species is believed to be plastoquinone. Couples the redox reaction to proton translocation, and thus conserves the redox energy in a proton gradient. The polypeptide is NAD(P)H-quinone oxidoreductase subunit 2 B, chloroplastic (Daucus carota (Wild carrot)).